A 119-amino-acid chain; its full sequence is MSNIIQAIEKEQMRSDMPKFAPGDTVIVRVRVKEGEKERLQAFEGVVIAKRNRGLHSAFTVRKMSSNGEGVERVFQTHSPIVGSVEVKRRGVVRQAKLYYLRELTGKKARIKEKLGKKK.

The protein belongs to the bacterial ribosomal protein bL19 family.

In terms of biological role, this protein is located at the 30S-50S ribosomal subunit interface and may play a role in the structure and function of the aminoacyl-tRNA binding site. This is Large ribosomal subunit protein bL19 from Psychromonas ingrahamii (strain DSM 17664 / CCUG 51855 / 37).